Reading from the N-terminus, the 463-residue chain is NADH-quinone oxidoreductase subunit N (463 aa).

14 consecutive transmembrane segments (helical) span residues 2–22, 25–45, 61–81, 91–110, 114–133, 149–169, 189–209, 223–243, 264–284, 292–312, 317–337, 362–382, 395–415, and 434–454; these read NTLI…ILNF, GIVP…FYEF, FSTA…ALSH, ISDF…AMVS, LAMF…VLAA, FLMG…IYGA, IWFP…IAAV, PALT…ATLF, FTNV…IMAL, MLAF…LTIA, VLLY…SVIL, AAIL…SGFF, GYVA…GYYF, and PFLI…LGLF.

It belongs to the complex I subunit 2 family. In terms of assembly, NDH-1 is composed of 14 different subunits. Subunits NuoA, H, J, K, L, M, N constitute the membrane sector of the complex.

Its subcellular location is the cell inner membrane. The catalysed reaction is a quinone + NADH + 5 H(+)(in) = a quinol + NAD(+) + 4 H(+)(out). NDH-1 shuttles electrons from NADH, via FMN and iron-sulfur (Fe-S) centers, to quinones in the respiratory chain. The immediate electron acceptor for the enzyme in this species is believed to be a menaquinone. Couples the redox reaction to proton translocation (for every two electrons transferred, four hydrogen ions are translocated across the cytoplasmic membrane), and thus conserves the redox energy in a proton gradient. In Flavobacterium johnsoniae (strain ATCC 17061 / DSM 2064 / JCM 8514 / BCRC 14874 / CCUG 350202 / NBRC 14942 / NCIMB 11054 / UW101) (Cytophaga johnsonae), this protein is NADH-quinone oxidoreductase subunit N.